A 221-amino-acid chain; its full sequence is Glutathione peroxidase 6 (221 aa).

A signal peptide spans 1–19; the sequence is MTQQFWGPCLFSLFMAVLA. The active site involves cysteine 73.

Belongs to the glutathione peroxidase family. In terms of tissue distribution, expressed in the Bowman glands.

Its subcellular location is the secreted. It carries out the reaction 2 glutathione + H2O2 = glutathione disulfide + 2 H2O. The protein is Glutathione peroxidase 6 (Gpx6) of Rattus norvegicus (Rat).